Consider the following 230-residue polypeptide: Large ribosomal subunit protein uL1 (230 aa).

This sequence belongs to the universal ribosomal protein uL1 family. Part of the 50S ribosomal subunit.

In terms of biological role, binds directly to 23S rRNA. The L1 stalk is quite mobile in the ribosome, and is involved in E site tRNA release. Its function is as follows. Protein L1 is also a translational repressor protein, it controls the translation of the L11 operon by binding to its mRNA. In Acholeplasma laidlawii (strain PG-8A), this protein is Large ribosomal subunit protein uL1.